Reading from the N-terminus, the 71-residue chain is Movement protein TGBp3 (71 aa).

The Lumenal portion of the chain corresponds to 1-4; it reads MWSD. The chain crosses the membrane as a helical span at residues 5 to 27; that stretch reads SLVSRICVPIIVVCTSIALLNVV. The Cytoplasmic segment spans residues 28–71; the sequence is SFRSECSCVVHISGAAIDIRGCSFTPDFIEYAKTLRVFNHRYQE.

Belongs to the Tymovirales TGBp3 protein family.

Its subcellular location is the host endoplasmic reticulum membrane. Functionally, plays a role in viral cell-to-cell propagation, by facilitating genome transport to neighboring plant cells through plasmosdesmata. May induce the formation of granular vesicles derived from the Endoplasmic reticulum, which align on actin filaments. This chain is Movement protein TGBp3, found in Populus balsamifera (Balsam poplar).